The primary structure comprises 843 residues: Pentatricopeptide repeat-containing protein At4g21880, mitochondrial (843 aa).

PPR repeat units lie at residues 392–426, 427–461, 462–496, 497–531, 532–562, 564–594, and 598–632; these read SSTSYENLVSYLCGSNEVVTALDIVENMCEAGLVI, SANILHSLLQAIEQILEFNLVQRIYSIMSNKSVKP, NSETFRKSINLCIRIKDFEGAYNMLGNLKNFNLAP, NSSMYNSIMAGYFREKKVNSALKVLKEMKEADVKP, DSVTFSYLINYCGEEATIAKYYKEMKQAGVE, NKHVYMSLVKAYASCGQFEKAKQVLMDLEVP, and HNELKSVLISALASNGNITEALSIYEEMKKLRCPV.

Belongs to the PPR family. P subfamily.

The protein localises to the mitochondrion. The protein is Pentatricopeptide repeat-containing protein At4g21880, mitochondrial of Arabidopsis thaliana (Mouse-ear cress).